The primary structure comprises 320 residues: MKTVTGFASATIGNVACGFDVLGFAITEPGDEVILTLREERSGELPVSITSITGDGGALPRNPKKNTSSFVVLKFLEYIRTNKGIDFEGHIELELKKNLPLSSGMGSSAASAAAALVAANELMGRPCNKMELVNFAIEGERVACGSAHADNAAPAMLGNFVLIRSYNPIDLITIPSPDNLYCTLVHPHIEVRTAYARSVLPRMISLKTATEQWGNVGALISGLLTSDYELIGRSLVDVIAEPKRAPLIPGFYDVKHAALEAGAIGCSIAGSGPSIFAFSSSPETASRVGEAMQTAFSTLKEKLQSDIWISPVCKQGAKVI.

100 to 110 (PLSSGMGSSAA) serves as a coordination point for ATP.

It belongs to the GHMP kinase family. Homoserine kinase subfamily.

The protein resides in the cytoplasm. It carries out the reaction L-homoserine + ATP = O-phospho-L-homoserine + ADP + H(+). It functions in the pathway amino-acid biosynthesis; L-threonine biosynthesis; L-threonine from L-aspartate: step 4/5. In terms of biological role, catalyzes the ATP-dependent phosphorylation of L-homoserine to L-homoserine phosphate. This is Homoserine kinase from Chlorobium phaeobacteroides (strain BS1).